A 428-amino-acid polypeptide reads, in one-letter code: GTPase Obg (428 aa).

The region spanning 1 to 158 is the Obg domain; sequence MFIDEVIITV…IKVKLELKLL (158 aa). The OBG-type G domain occupies 159–330; it reads ADVALVGYPS…ILYKTYDMLS (172 aa). Residues 165-172, 190-194, 212-215, 282-285, and 311-313 each bind GTP; these read GYPSVGKS, FTTLE, DIPG, NKMD, and SVL. Positions 172 and 192 each coordinate Mg(2+). Positions 349–428 constitute an OCT domain; it reads ELKIEKEDFE…IADVEFEYFE (80 aa).

Belongs to the TRAFAC class OBG-HflX-like GTPase superfamily. OBG GTPase family. In terms of assembly, monomer. Mg(2+) serves as cofactor.

The protein localises to the cytoplasm. Functionally, an essential GTPase which binds GTP, GDP and possibly (p)ppGpp with moderate affinity, with high nucleotide exchange rates and a fairly low GTP hydrolysis rate. Plays a role in control of the cell cycle, stress response, ribosome biogenesis and in those bacteria that undergo differentiation, in morphogenesis control. This Fusobacterium nucleatum subsp. nucleatum (strain ATCC 25586 / DSM 15643 / BCRC 10681 / CIP 101130 / JCM 8532 / KCTC 2640 / LMG 13131 / VPI 4355) protein is GTPase Obg.